A 1378-amino-acid polypeptide reads, in one-letter code: DNA-directed RNA polymerase subunit beta (1378 aa).

It belongs to the RNA polymerase beta chain family. As to quaternary structure, the RNAP catalytic core consists of 2 alpha, 1 beta, 1 beta' and 1 omega subunit. When a sigma factor is associated with the core the holoenzyme is formed, which can initiate transcription.

It catalyses the reaction RNA(n) + a ribonucleoside 5'-triphosphate = RNA(n+1) + diphosphate. DNA-dependent RNA polymerase catalyzes the transcription of DNA into RNA using the four ribonucleoside triphosphates as substrates. The chain is DNA-directed RNA polymerase subunit beta from Mesorhizobium japonicum (strain LMG 29417 / CECT 9101 / MAFF 303099) (Mesorhizobium loti (strain MAFF 303099)).